Consider the following 955-residue polypeptide: Structure-specific endonuclease subunit SLX4 (955 aa).

Disordered regions lie at residues 75-173 (QAEQ…RTTS), 189-231 (PVTT…TVSR), 352-376 (GPSN…KKPR), 539-608 (EMQK…PTKI), 621-648 (PIVA…PPPR), 705-784 (AAGQ…ASPD), and 819-846 (LDSD…EKDS). The span at 123–137 (RKARKTANGVTKKKR) shows a compositional bias: basic residues. A compositionally biased stretch (polar residues) spans 150 to 159 (NEITTPTKNQ). The segment covering 189–198 (PVTTSTTDLT) has biased composition (low complexity). Residues 209-225 (TKSRVRKTSSAASRKKK) are compositionally biased toward basic residues. Residues 352–362 (GPSNDSKIPNQ) show a composition bias toward polar residues. The span at 539 to 551 (EMQKSPSRSEPKG) shows a compositional bias: basic and acidic residues. Positions 579-601 (SANSAEHTLKTQASKSTHFASTT) are enriched in polar residues. Low complexity-rich tracts occupy residues 705–720 (AAGQ…RTSA) and 727–737 (KTSTAAAAAKS). Composition is skewed to basic residues over residues 738–748 (PTKRPVGRPRK) and 767–776 (KRPRGRPKKN). Residues 828–841 (SPSPSLSPEPVFSS) show a composition bias toward low complexity.

This sequence belongs to the SLX4 family. In terms of assembly, forms a heterodimer with SLX1. In terms of processing, phosphorylated in response to DNA damage.

The protein resides in the nucleus. Regulatory subunit of the SLX1-SLX4 structure-specific endonuclease that resolves DNA secondary structures generated during DNA repair and recombination. Has endonuclease activity towards branched DNA substrates, introducing single-strand cuts in duplex DNA close to junctions with ss-DNA. The sequence is that of Structure-specific endonuclease subunit SLX4 from Pyricularia oryzae (strain 70-15 / ATCC MYA-4617 / FGSC 8958) (Rice blast fungus).